The primary structure comprises 694 residues: Frizzled-2 (694 aa).

An N-terminal signal peptide occupies residues 1-22 (MRHNRLKVLILGLVLLLTSCRA). Topologically, residues 23–315 (DGPLHSADHG…GPFFSNDEKD (293 aa)) are extracellular. In terms of domain architecture, FZ spans 59-180 (DPNLRCEEIT…GDPDNLCMEQ (122 aa)). Cystine bridges form between C64/C125, C72/C118, C109/C147, C136/C177, and C140/C164. N78 carries N-linked (GlcNAc...) asparagine glycosylation. The tract at residues 175-253 (NLCMEQPSYT…QGEKASGKEC (79 aa)) is disordered. Positions 187-224 (GSGGSSGGSGGSGSGSGSGGKRKQGGSGSGGSGAGGSS) are enriched in gly residues. A glycan (N-linked (GlcNAc...) asparagine) is linked at N288. A helical membrane pass occupies residues 316-336 (FAGLWIALWSGLCFCSTLMTL). Topologically, residues 337 to 352 (TTFIIDTERFKYPERP) are cytoplasmic. The helical transmembrane segment at 353–373 (IVFLSACYFMVAVGYLSRNFL) threads the bilayer. The Extracellular segment spans residues 374–397 (QNEEIACDGLLLRESSTGPHSCTL). The chain crosses the membrane as a helical span at residues 398-418 (VFLLTYFFGMASSIWWVILSF). The Cytoplasmic portion of the chain corresponds to 419–439 (TWFLAAGLKWGNEAITKHSQY). The chain crosses the membrane as a helical span at residues 440-460 (FHLAAWLIPTVQSVAVLLLSA). Over 461–482 (VDGDPILGICYVGNLNPDHLKT) the chain is Extracellular. A helical transmembrane segment spans residues 483–503 (FVLAPLFVYLVIGTTFLMAGF). Topologically, residues 504–534 (VSLFRIRSVIKQQGGVGAGVKADKLEKLMIR) are cytoplasmic. A helical membrane pass occupies residues 535-555 (IGIFSVLYTVPATIVIGCYLY). Residues 556-584 (EAAYFEDWIKALACPCAQVKGPGKKPLYS) lie on the Extracellular side of the membrane. Residues 585–605 (VLMLKYFMALAVGITSGVWIW) traverse the membrane as a helical segment. Residues 606–694 (SGKTLESWRR…VLKQPAASHV (89 aa)) are Cytoplasmic-facing. Residues 608–613 (KTLESW) carry the Lys-Thr-X-X-X-Trp motif, mediates interaction with the PDZ domain of Dvl family members motif. The PDZ-binding motif lies at 692-694 (SHV).

The protein belongs to the G-protein coupled receptor Fz/Smo family. As to quaternary structure, interacts with ATP6AP2.

It is found in the cell membrane. Receptor for Wnt proteins. Most of frizzled receptors are coupled to the beta-catenin canonical signaling pathway, which leads to the activation of disheveled proteins, inhibition of GSK-3 kinase, nuclear accumulation of beta-catenin and activation of Wnt target genes. A second signaling pathway involving PKC and calcium fluxes has been seen for some family members, but it is not yet clear if it represents a distinct pathway or if it can be integrated in the canonical pathway, as PKC seems to be required for Wnt-mediated inactivation of GSK-3 kinase. Both pathways seem to involve interactions with G-proteins. Required to coordinate the cytoskeletons of epidermal cells to produce a parallel array of cuticular hairs and bristles. This Drosophila melanogaster (Fruit fly) protein is Frizzled-2 (fz2).